Here is a 394-residue protein sequence, read N- to C-terminus: Elongation factor Tu 1 (394 aa).

One can recognise a tr-type G domain in the interval 10-204 (KPHVNVGTIG…HLDTYIPEPE (195 aa)). A G1 region spans residues 19–26 (GHVDHGKT). 19 to 26 (GHVDHGKT) provides a ligand contact to GTP. Thr26 serves as a coordination point for Mg(2+). The G2 stretch occupies residues 60–64 (GITIN). Residues 81–84 (DCPG) form a G3 region. GTP contacts are provided by residues 81-85 (DCPGH) and 136-139 (NKCD). Residues 136–139 (NKCD) are G4. The G5 stretch occupies residues 174-176 (SAL).

Belongs to the TRAFAC class translation factor GTPase superfamily. Classic translation factor GTPase family. EF-Tu/EF-1A subfamily. Monomer.

It is found in the cytoplasm. The catalysed reaction is GTP + H2O = GDP + phosphate + H(+). Its function is as follows. GTP hydrolase that promotes the GTP-dependent binding of aminoacyl-tRNA to the A-site of ribosomes during protein biosynthesis. This is Elongation factor Tu 1 from Haemophilus influenzae (strain 86-028NP).